The chain runs to 184 residues: NADH-quinone oxidoreductase subunit B (184 aa).

[4Fe-4S] cluster is bound by residues Cys-37, Cys-38, Cys-103, and Cys-132.

Belongs to the complex I 20 kDa subunit family. In terms of assembly, NDH-1 is composed of 14 different subunits. Subunits NuoB, C, D, E, F, and G constitute the peripheral sector of the complex. [4Fe-4S] cluster serves as cofactor.

Its subcellular location is the cell membrane. It catalyses the reaction a quinone + NADH + 5 H(+)(in) = a quinol + NAD(+) + 4 H(+)(out). NDH-1 shuttles electrons from NADH, via FMN and iron-sulfur (Fe-S) centers, to quinones in the respiratory chain. The immediate electron acceptor for the enzyme in this species is believed to be a menaquinone. Couples the redox reaction to proton translocation (for every two electrons transferred, four hydrogen ions are translocated across the cytoplasmic membrane), and thus conserves the redox energy in a proton gradient. The polypeptide is NADH-quinone oxidoreductase subunit B (Nocardia farcinica (strain IFM 10152)).